A 39-amino-acid polypeptide reads, in one-letter code: GVKEKLLAVLRKACPVIEKLAKKCHGTVATLKKACSLIH.

Cys14 and Cys35 are oxidised to a cystine.

This sequence belongs to the ectatomin family. Ectatomin-Et subfamily. As to quaternary structure, heterodimer of subunits A and B; disulfide-linked. Expressed by the venom gland.

It localises to the secreted. The protein resides in the target cell membrane. This is U1-ectatotoxin-Et1b subunit A from Ectatomma tuberculatum (Selva ant).